Reading from the N-terminus, the 214-residue chain is Pyridoxine/pyridoxamine 5'-phosphate oxidase (214 aa).

Substrate is bound by residues 7–10 and lysine 65; that span reads REEY. FMN-binding positions include 60 to 65, 75 to 76, arginine 81, lysine 82, and glutamine 104; these read RTVLLK and FT. Residues tyrosine 122, arginine 126, and serine 130 each coordinate substrate. FMN contacts are provided by residues 139–140 and tryptophan 184; that span reads QS. 190-192 is a binding site for substrate; that stretch reads RLH. Arginine 194 provides a ligand contact to FMN.

Belongs to the pyridoxamine 5'-phosphate oxidase family. Homodimer. Requires FMN as cofactor.

The catalysed reaction is pyridoxamine 5'-phosphate + O2 + H2O = pyridoxal 5'-phosphate + H2O2 + NH4(+). It catalyses the reaction pyridoxine 5'-phosphate + O2 = pyridoxal 5'-phosphate + H2O2. It functions in the pathway cofactor metabolism; pyridoxal 5'-phosphate salvage; pyridoxal 5'-phosphate from pyridoxamine 5'-phosphate: step 1/1. Its pathway is cofactor metabolism; pyridoxal 5'-phosphate salvage; pyridoxal 5'-phosphate from pyridoxine 5'-phosphate: step 1/1. In terms of biological role, catalyzes the oxidation of either pyridoxine 5'-phosphate (PNP) or pyridoxamine 5'-phosphate (PMP) into pyridoxal 5'-phosphate (PLP). This chain is Pyridoxine/pyridoxamine 5'-phosphate oxidase, found in Crocosphaera subtropica (strain ATCC 51142 / BH68) (Cyanothece sp. (strain ATCC 51142)).